The chain runs to 1053 residues: Translation initiation factor IF-2 (1053 aa).

Residues 1–20 (MSESKNSGENTLSVTPTKTL) show a composition bias toward polar residues. A disordered region spans residues 1 to 442 (MSESKNSGEN…TATGGEEEER (442 aa)). Low complexity-rich tracts occupy residues 64 to 76 (EAAP…ATVT) and 83 to 102 (RPAA…AAVP). Pro residues-rich tracts occupy residues 131-141 (PAQPKAEPVPA) and 150-161 (APVPPVPAPSAP). The span at 178–220 (PVSQAKPIQTAPVQTAPAAQASASQTTGPRPVAAGPRPATGAA) shows a compositional bias: low complexity. The span at 255–264 (GGRGGPGRGE) shows a compositional bias: gly residues. Basic and acidic residues-rich tracts occupy residues 279–288 (LTDEEREARA) and 295–353 (RIRE…EAKR). The segment covering 375 to 386 (TATAAAPAAAAP) has biased composition (low complexity). Residues 550–720 (PRPPVVTIMG…ALQAELLDLK (171 aa)) form the tr-type G domain. Residues 559–566 (GHVDHGKT) are G1. 559–566 (GHVDHGKT) contacts GTP. Residues 584–588 (GITQH) are G2. The tract at residues 606–609 (DTPG) is G3. Residues 606-610 (DTPGH) and 660-663 (NKID) contribute to the GTP site. A G4 region spans residues 660–663 (NKID). The interval 696–698 (SAT) is G5.

The protein belongs to the TRAFAC class translation factor GTPase superfamily. Classic translation factor GTPase family. IF-2 subfamily.

The protein resides in the cytoplasm. One of the essential components for the initiation of protein synthesis. Protects formylmethionyl-tRNA from spontaneous hydrolysis and promotes its binding to the 30S ribosomal subunits. Also involved in the hydrolysis of GTP during the formation of the 70S ribosomal complex. In Beijerinckia indica subsp. indica (strain ATCC 9039 / DSM 1715 / NCIMB 8712), this protein is Translation initiation factor IF-2.